The primary structure comprises 96 residues: Large ribosomal subunit protein uL23 (96 aa).

The protein belongs to the universal ribosomal protein uL23 family. In terms of assembly, part of the 50S ribosomal subunit. Contacts protein L29, and trigger factor when it is bound to the ribosome.

Functionally, one of the early assembly proteins it binds 23S rRNA. One of the proteins that surrounds the polypeptide exit tunnel on the outside of the ribosome. Forms the main docking site for trigger factor binding to the ribosome. This Caldicellulosiruptor saccharolyticus (strain ATCC 43494 / DSM 8903 / Tp8T 6331) protein is Large ribosomal subunit protein uL23.